The following is a 144-amino-acid chain: Large ribosomal subunit protein uL16 (144 aa).

Residues 1–16 (MLIPKRVKYRKQHRGR) are compositionally biased toward basic residues. Positions 1-23 (MLIPKRVKYRKQHRGRPGGGMAK) are disordered.

The protein belongs to the universal ribosomal protein uL16 family. Part of the 50S ribosomal subunit.

Binds 23S rRNA and is also seen to make contacts with the A and possibly P site tRNAs. This Pelotomaculum thermopropionicum (strain DSM 13744 / JCM 10971 / SI) protein is Large ribosomal subunit protein uL16.